Here is a 330-residue protein sequence, read N- to C-terminus: MTLIVTGAAGFIGANIVKALNERGETRIIAVDNLTRADKFKNLVDCEIDDYLDKTEFVERFARGDFGKVRAVFHEGACSDTMETDGRYMMDNNFRYSRAVLDACLAQGTQFLYASSAAIYGGSSRFVEAREFEAPLNVYGYSKFLFDQVIRRVMPSAKSQIAGFRYFNVYGPRESHKGRMASVAFHNFNQFRAEGKVKLFGEYNGYGPGEQTRDFVSVEDVAKVNLHFFDHPQKSGIFNLGTGRAQPFNDIATTVVNTLRALEGQPALTLAEQVEQGLVEYVPFPDALRGKYQCFTQADQTKLRAAGYDAPFLTVQEGVDRYVRWLFGQL.

NADP(+)-binding positions include 11–12 (FI), 32–33 (DN), Lys39, Lys54, 75–79 (EGACS), and Asn92. The Proton acceptor role is filled by Tyr139. Lys143 contacts NADP(+). Residue Asn168 participates in substrate binding. NADP(+) is bound by residues Val169 and Lys177. Lys177 functions as the Proton acceptor in the catalytic mechanism. Residues Arg179, His186, 200-203 (FGEY), Arg213, and Tyr292 each bind substrate.

The protein belongs to the NAD(P)-dependent epimerase/dehydratase family. HldD subfamily. In terms of assembly, homopentamer. Requires NADP(+) as cofactor.

The enzyme catalyses ADP-D-glycero-beta-D-manno-heptose = ADP-L-glycero-beta-D-manno-heptose. Its pathway is nucleotide-sugar biosynthesis; ADP-L-glycero-beta-D-manno-heptose biosynthesis; ADP-L-glycero-beta-D-manno-heptose from D-glycero-beta-D-manno-heptose 7-phosphate: step 4/4. Catalyzes the interconversion between ADP-D-glycero-beta-D-manno-heptose and ADP-L-glycero-beta-D-manno-heptose via an epimerization at carbon 6 of the heptose. The polypeptide is ADP-L-glycero-D-manno-heptose-6-epimerase (Burkholderia mallei (strain NCTC 10247)).